Consider the following 407-residue polypeptide: Aminomethyltransferase, mitochondrial (407 aa).

Residues 1–29 (MRGGLWQLGQSITRRLGQSDKKTIARRCY) constitute a mitochondrion transit peptide. Residues Glu234, Arg265, and Tyr403 each coordinate substrate.

Belongs to the GcvT family. As to quaternary structure, the glycine cleavage system is composed of four proteins: P, T, L and H.

It is found in the mitochondrion. The enzyme catalyses N(6)-[(R)-S(8)-aminomethyldihydrolipoyl]-L-lysyl-[protein] + (6S)-5,6,7,8-tetrahydrofolate = N(6)-[(R)-dihydrolipoyl]-L-lysyl-[protein] + (6R)-5,10-methylene-5,6,7,8-tetrahydrofolate + NH4(+). Functionally, the glycine cleavage system catalyzes the degradation of glycine. In Flaveria pringlei, this protein is Aminomethyltransferase, mitochondrial (GDCST).